Consider the following 370-residue polypeptide: tRNA 2-selenouridine synthase (370 aa).

One can recognise a Rhodanese domain in the interval 12–136 (FLEDVPMMDT…MRNFLLDTTR (125 aa)). Catalysis depends on cysteine 95, which acts as the S-selanylcysteine intermediate.

The protein belongs to the SelU family. In terms of assembly, monomer.

The enzyme catalyses 5-methylaminomethyl-2-thiouridine(34) in tRNA + selenophosphate + (2E)-geranyl diphosphate + H2O + H(+) = 5-methylaminomethyl-2-selenouridine(34) in tRNA + (2E)-thiogeraniol + phosphate + diphosphate. It carries out the reaction 5-methylaminomethyl-2-thiouridine(34) in tRNA + (2E)-geranyl diphosphate = 5-methylaminomethyl-S-(2E)-geranyl-thiouridine(34) in tRNA + diphosphate. The catalysed reaction is 5-methylaminomethyl-S-(2E)-geranyl-thiouridine(34) in tRNA + selenophosphate + H(+) = 5-methylaminomethyl-2-(Se-phospho)selenouridine(34) in tRNA + (2E)-thiogeraniol. It catalyses the reaction 5-methylaminomethyl-2-(Se-phospho)selenouridine(34) in tRNA + H2O = 5-methylaminomethyl-2-selenouridine(34) in tRNA + phosphate. Its function is as follows. Involved in the post-transcriptional modification of the uridine at the wobble position (U34) of tRNA(Lys), tRNA(Glu) and tRNA(Gln). Catalyzes the conversion of 2-thiouridine (S2U-RNA) to 2-selenouridine (Se2U-RNA). Acts in a two-step process involving geranylation of 2-thiouridine (S2U) to S-geranyl-2-thiouridine (geS2U) and subsequent selenation of the latter derivative to 2-selenouridine (Se2U) in the tRNA chain. In Azotobacter vinelandii (strain DJ / ATCC BAA-1303), this protein is tRNA 2-selenouridine synthase.